A 268-amino-acid polypeptide reads, in one-letter code: Forkhead box protein R1 (268 aa).

Residues 91 to 126 (EDSCSEASEVQQPLPPCRQKRKQRRSTVPLPLAPGR) are disordered. A DNA-binding region (fork-head) is located at residues 149-248 (RPPLHYFHLI…KEARTLASTQ (100 aa)).

Expressed in adult germ cells (at protein level). Expressed in heart, liver, lung and embryonic brain.

The protein localises to the nucleus. It is found in the cytoplasm. It localises to the perinuclear region. Transcription factor which acts as both an activator and a repressor. Activates transcription of a number of genes including the heat shock chaperones HSPA1A and HSPA6 and the antioxidant NADPH-dependent reductase DHRS2 which are involved in protection against oxidative stress. Required for normal brain development. The protein is Forkhead box protein R1 (Foxr1) of Mus musculus (Mouse).